The sequence spans 164 residues: ATP synthase subunit b 2 (164 aa).

The chain crosses the membrane as a helical span at residues 4 to 24 (TFWAFVGLVLFLALLAYFKVP).

The protein belongs to the ATPase B chain family. In terms of assembly, F-type ATPases have 2 components, F(1) - the catalytic core - and F(0) - the membrane proton channel. F(1) has five subunits: alpha(3), beta(3), gamma(1), delta(1), epsilon(1). F(0) has three main subunits: a(1), b(2) and c(10-14). The alpha and beta chains form an alternating ring which encloses part of the gamma chain. F(1) is attached to F(0) by a central stalk formed by the gamma and epsilon chains, while a peripheral stalk is formed by the delta and b chains.

It localises to the cell inner membrane. Its function is as follows. F(1)F(0) ATP synthase produces ATP from ADP in the presence of a proton or sodium gradient. F-type ATPases consist of two structural domains, F(1) containing the extramembraneous catalytic core and F(0) containing the membrane proton channel, linked together by a central stalk and a peripheral stalk. During catalysis, ATP synthesis in the catalytic domain of F(1) is coupled via a rotary mechanism of the central stalk subunits to proton translocation. In terms of biological role, component of the F(0) channel, it forms part of the peripheral stalk, linking F(1) to F(0). The polypeptide is ATP synthase subunit b 2 (Bartonella quintana (strain Toulouse) (Rochalimaea quintana)).